We begin with the raw amino-acid sequence, 289 residues long: Protoheme IX farnesyltransferase (289 aa).

Transmembrane regions (helical) follow at residues 9–29 (VALM…PVMM), 35–55 (MPSL…AGSA), 89–109 (LTFG…LVNW), 110–130 (PSAL…TLGL), 138–158 (IVIG…AVTG), 164–184 (AVLL…ALAM), 188–208 (DDYA…EVVT), 228–248 (VAHT…WFLA), and 269–289 (FHMS…TAVV).

Belongs to the UbiA prenyltransferase family. Protoheme IX farnesyltransferase subfamily.

The protein resides in the cell membrane. It carries out the reaction heme b + (2E,6E)-farnesyl diphosphate + H2O = Fe(II)-heme o + diphosphate. It participates in porphyrin-containing compound metabolism; heme O biosynthesis; heme O from protoheme: step 1/1. Its function is as follows. Converts heme B (protoheme IX) to heme O by substitution of the vinyl group on carbon 2 of heme B porphyrin ring with a hydroxyethyl farnesyl side group. This chain is Protoheme IX farnesyltransferase, found in Frankia alni (strain DSM 45986 / CECT 9034 / ACN14a).